The following is a 388-amino-acid chain: Succinate--CoA ligase [ADP-forming] subunit beta (388 aa).

The ATP-grasp domain maps to 9 to 244; sequence KSLFAEYGLP…PSQDDAREAH (236 aa). Residues lysine 46, 53-55, glutamate 99, threonine 102, and glutamate 107 each bind ATP; that span reads GRG. The Mg(2+) site is built by asparagine 199 and aspartate 213. Residues asparagine 264 and 321–323 contribute to the substrate site; that span reads GIV.

This sequence belongs to the succinate/malate CoA ligase beta subunit family. Heterotetramer of two alpha and two beta subunits. Mg(2+) serves as cofactor.

It catalyses the reaction succinate + ATP + CoA = succinyl-CoA + ADP + phosphate. The catalysed reaction is GTP + succinate + CoA = succinyl-CoA + GDP + phosphate. It participates in carbohydrate metabolism; tricarboxylic acid cycle; succinate from succinyl-CoA (ligase route): step 1/1. Functionally, succinyl-CoA synthetase functions in the citric acid cycle (TCA), coupling the hydrolysis of succinyl-CoA to the synthesis of either ATP or GTP and thus represents the only step of substrate-level phosphorylation in the TCA. The beta subunit provides nucleotide specificity of the enzyme and binds the substrate succinate, while the binding sites for coenzyme A and phosphate are found in the alpha subunit. This is Succinate--CoA ligase [ADP-forming] subunit beta from Shewanella woodyi (strain ATCC 51908 / MS32).